The sequence spans 231 residues: Large ribosomal subunit protein uL1 (231 aa).

The protein belongs to the universal ribosomal protein uL1 family. In terms of assembly, part of the 50S ribosomal subunit.

In terms of biological role, binds directly to 23S rRNA. The L1 stalk is quite mobile in the ribosome, and is involved in E site tRNA release. Protein L1 is also a translational repressor protein, it controls the translation of the L11 operon by binding to its mRNA. In Thioalkalivibrio sulfidiphilus (strain HL-EbGR7), this protein is Large ribosomal subunit protein uL1.